A 379-amino-acid polypeptide reads, in one-letter code: tRNA(Met) cytidine acetate ligase (379 aa).

ATP is bound by residues 8–21, glycine 97, asparagine 153, and arginine 176; that span reads IAEF…HEYL.

This sequence belongs to the TmcAL family.

It is found in the cytoplasm. It carries out the reaction cytidine(34) in elongator tRNA(Met) + acetate + ATP = N(4)-acetylcytidine(34) in elongator tRNA(Met) + AMP + diphosphate. In terms of biological role, catalyzes the formation of N(4)-acetylcytidine (ac(4)C) at the wobble position of elongator tRNA(Met), using acetate and ATP as substrates. First activates an acetate ion to form acetyladenylate (Ac-AMP) and then transfers the acetyl group to tRNA to form ac(4)C34. The chain is tRNA(Met) cytidine acetate ligase from Lactococcus lactis subsp. cremoris (strain MG1363).